Reading from the N-terminus, the 177-residue chain is Probable prophage lysozyme (177 aa).

Glutamate 35 (proton donor) is an active-site residue. The active-site Nucleophile is aspartate 44.

It belongs to the glycosyl hydrolase 24 family.

It catalyses the reaction Hydrolysis of (1-&gt;4)-beta-linkages between N-acetylmuramic acid and N-acetyl-D-glucosamine residues in a peptidoglycan and between N-acetyl-D-glucosamine residues in chitodextrins.. In terms of biological role, essential for lysis of bacterial cell wall, by showing cell wall hydrolyzing activity. The sequence is that of Probable prophage lysozyme (rrrQ) from Escherichia coli (strain K12).